Reading from the N-terminus, the 37-residue chain is Large ribosomal subunit protein bL36 (37 aa).

The protein belongs to the bacterial ribosomal protein bL36 family.

The chain is Large ribosomal subunit protein bL36 from Treponema denticola (strain ATCC 35405 / DSM 14222 / CIP 103919 / JCM 8153 / KCTC 15104).